We begin with the raw amino-acid sequence, 227 residues long: MICOS complex subunit MIC19 (227 aa).

The N-myristoyl glycine moiety is linked to residue glycine 2. Residue serine 29 is modified to Phosphoserine. 2 disordered regions span residues 34–61 and 73–92; these read DRMK…SDEE and EQAK…KELD. Over residues 39-49 the composition is skewed to polar residues; it reads SSPSGSKSQRY. Tyrosine 49 is subject to Phosphotyrosine. Phosphoserine occurs at positions 50, 56, and 58. Lysine 142 is subject to N6-acetyllysine. Positions 180-222 constitute a CHCH domain; that stretch reads HPVCADLQAKILQCYRENTHQTLKCSALATQYMHCVNHAKQSM. 2 consecutive short sequence motifs (cx9C motif) follow at residues 183 to 193 and 204 to 214; these read CADLQAKILQC and CSALATQYMHC. 2 cysteine pairs are disulfide-bonded: cysteine 183/cysteine 214 and cysteine 193/cysteine 204.

The protein belongs to the MICOS complex subunit Mic19 family. Metazoan Mic19 subfamily. In terms of assembly, component of the mitochondrial contact site and cristae organizing system (MICOS) complex, composed of at least MICOS10/MIC10, CHCHD3/MIC19, CHCHD6/MIC25, APOOL/MIC27, IMMT/MIC60, APOO/MIC23/MIC26 and MICOS13/MIC13. This complex was also known under the names MINOS or MitOS complex. The MICOS complex associates with mitochondrial outer membrane proteins SAMM50, MTX1 and MTX2 (together described as components of the mitochondrial outer membrane sorting assembly machinery (SAM) complex) and DNAJC11, mitochondrial inner membrane protein TMEM11 and with HSPA9. The MICOS and SAM complexes together with DNAJC11 are part of a large protein complex spanning both membranes termed the mitochondrial intermembrane space bridging (MIB) complex. Interacts with HSPA1A/HSPA1B and OPA1, preferentially with the soluble OPA1 form. Interacts with IMMT/MIC60. (Microbial infection) Interacts with human cytomegalovirus protein UL13; this interaction alters cristae architecture. As to expression, detected at low levels in brain, placenta, lung, liver, kidney and pancreas with increased levels in heart and skeletal muscle. Higher expression in primary lung cancers than in normal lung tissue.

It is found in the mitochondrion inner membrane. The protein resides in the cytoplasm. Its subcellular location is the nucleus. It localises to the mitochondrion. Functionally, component of the MICOS complex, a large protein complex of the mitochondrial inner membrane that plays crucial roles in the maintenance of crista junctions, inner membrane architecture, and formation of contact sites to the outer membrane. Plays an important role in the maintenance of the MICOS complex stability and the mitochondrial cristae morphology. Has also been shown to function as a transcription factor which binds to the BAG1 promoter and represses BAG1 transcription. This chain is MICOS complex subunit MIC19 (CHCHD3), found in Homo sapiens (Human).